A 353-amino-acid chain; its full sequence is Uroporphyrinogen decarboxylase (353 aa).

Substrate is bound by residues 35 to 39, Phe54, Asp84, Tyr160, Ser215, and His329; that span reads RQAGR.

Belongs to the uroporphyrinogen decarboxylase family. In terms of assembly, homodimer.

It is found in the cytoplasm. It catalyses the reaction uroporphyrinogen III + 4 H(+) = coproporphyrinogen III + 4 CO2. It functions in the pathway porphyrin-containing compound metabolism; protoporphyrin-IX biosynthesis; coproporphyrinogen-III from 5-aminolevulinate: step 4/4. In terms of biological role, catalyzes the decarboxylation of four acetate groups of uroporphyrinogen-III to yield coproporphyrinogen-III. The sequence is that of Uroporphyrinogen decarboxylase from Staphylococcus epidermidis (strain ATCC 12228 / FDA PCI 1200).